We begin with the raw amino-acid sequence, 68 residues long: UPF0434 protein BMA10229_A1047 (68 aa).

This sequence belongs to the UPF0434 family.

The sequence is that of UPF0434 protein BMA10229_A1047 from Burkholderia mallei (strain NCTC 10229).